The following is a 124-amino-acid chain: Fluoride-specific ion channel FluC 1 (124 aa).

The next 4 helical transmembrane spans lie at 1-21, 30-50, 56-76, and 102-122; these read MNWL…YVTD, AVFP…LGLL, AGVA…GALT, and IASV…AQAL. Positions 73 and 76 each coordinate Na(+).

It belongs to the fluoride channel Fluc/FEX (TC 1.A.43) family.

The protein localises to the cell membrane. The enzyme catalyses fluoride(in) = fluoride(out). Na(+) is not transported, but it plays an essential structural role and its presence is essential for fluoride channel function. In terms of biological role, fluoride-specific ion channel. Important for reducing fluoride concentration in the cell, thus reducing its toxicity. The chain is Fluoride-specific ion channel FluC 1 from Streptomyces avermitilis (strain ATCC 31267 / DSM 46492 / JCM 5070 / NBRC 14893 / NCIMB 12804 / NRRL 8165 / MA-4680).